A 288-amino-acid chain; its full sequence is Glycine--tRNA ligase alpha subunit (288 aa).

Belongs to the class-II aminoacyl-tRNA synthetase family. Tetramer of two alpha and two beta subunits.

It is found in the cytoplasm. The catalysed reaction is tRNA(Gly) + glycine + ATP = glycyl-tRNA(Gly) + AMP + diphosphate. This chain is Glycine--tRNA ligase alpha subunit, found in Rickettsia africae (strain ESF-5).